A 204-amino-acid polypeptide reads, in one-letter code: Outer-membrane lipoprotein carrier protein (204 aa).

Positions 1-21 (MKKYLNLTALLLVGISNVTWA) are cleaved as a signal peptide.

This sequence belongs to the LolA family. As to quaternary structure, monomer.

Its subcellular location is the periplasm. Participates in the translocation of lipoproteins from the inner membrane to the outer membrane. Only forms a complex with a lipoprotein if the residue after the N-terminal Cys is not an aspartate (The Asp acts as a targeting signal to indicate that the lipoprotein should stay in the inner membrane). This is Outer-membrane lipoprotein carrier protein from Histophilus somni (strain 129Pt) (Haemophilus somnus).